We begin with the raw amino-acid sequence, 79 residues long: Hematopoietic cell signal transducer (79 aa).

The first 18 residues, 1–18 (MAPPGHLLFLFLLPVAAS), serve as a signal peptide directing secretion. Residues 19–35 (QTNEGSCSGCGPLSLPL) are Extracellular-facing. The helical transmembrane segment at 36 to 56 (LAGLVAADAVMSLLIVGVVFV) threads the bilayer. Residues 57–79 (CMRLHSRPAQEDGRVYINMPGRG) are Cytoplasmic-facing. Tyr-72 bears the Phosphotyrosine mark. The tract at residues 72 to 74 (YIN) is GRB2 binding site. Residues 72–75 (YINM) form a PIK3R1 binding site region.

This sequence belongs to the DAP10 family. As to quaternary structure, homodimer; Disulfide-linked. Heterohexamer composed of four subunits of HCST/DAP10 and two subunits of KLRK1. Interacts (via transmembrane domain) with KLRK1 (via transmembrane domain); the interaction is required for KLRK1 NK cell surface and induces NK cell-mediated cytotoxicity. Interacts with PIK3R1 and GRB2. Interacts with CLEC5A. Forms an CLEC5A/TYROBP/HCST trimolecular complex depending almost solely on TYROBP. Interacts with CD300H. Post-translationally, phosphorylated; PIK3R1 and GRB2 associate specifically with tyrosine-phosphorylated HCST. In terms of processing, O-glycosylated.

The protein resides in the membrane. Functionally, transmembrane adapter protein which associates with KLRK1 to form an activation receptor KLRK1-HCST in lymphoid and myeloid cells; this receptor plays a major role in triggering cytotoxicity against target cells expressing cell surface ligands such as MHC class I chain-related MICA and MICB, and UL16-binding proteins (ULBPs); these ligands are up-regulated by stress conditions and pathological state such as viral infection and tumor transformation. Functions as a docking site for PI3-kinase PIK3R1 and GRB2. Interaction of ULBPs with KLRK1-HCST triggers calcium mobilization and activation of the PIK3R1, MAP2K/ERK, and JAK2/STAT5 signaling pathways. Both PIK3R1 and GRB2 are required for full KLRK1-HCST-mediated activation and ultimate killing of target cells. In NK cells, KLRK1-HCST signaling directly induces cytotoxicity and enhances cytokine production initiated via DAP12/TYROBP-associated receptors. In T-cells, it provides primarily costimulation for TCR-induced signals. KLRK1-HCST receptor plays a role in immune surveillance against tumors and is required for cytolysis of tumors cells; indeed, melanoma cells that do not express KLRK1 ligands escape from immune surveillance mediated by NK cells. The polypeptide is Hematopoietic cell signal transducer (Hcst) (Rattus norvegicus (Rat)).